The chain runs to 581 residues: MEPDGYVEELPGTILIYKENQYAASEHSVLKKDGDIVLQPQPSDDPNDPLNWNKFRKNWHLVLICLVSLVTGAIANDAGSAQDQMNAELGISYDAMDNAAGVLFICVGYFTYLAMPATFLYGRRCVYLVCLLFGMLGSMWFALVKTTSNSIGNQAFIGISEACAEALTQFSVSEVFFEHERGIKIGIYILSTSVGTYLGPLAAGYIASSQGWRWIGWWGLIISGITFVLFLFTFEETTFDRAAAIDRKQIQISNDQLTVKEDFDLKDMQSDIKPDVEKSDAMDDSKMKVDYTVNEISNAVQPIYSKPSYWKRIALITPANSLSGIGFRQYIMRLFQTLRIFLFPAVLYSGLQWGAQDAWLSFYLTTEEEDWMEAPYNYGDNAVAIMNVPCIIGATIGCIYGGYFGDYFTLWAAKRNNGIKEAESRLWLMILPCIINPIGLFMFGIGTARHWHWGPTYVGLGFIGFGWGCAGDISMAYLMDAYPGMVLEAMVGVSVINNTFGYVFTFACQSWIDSLGTERTYISIGVLCFIFIATSFPMILCGKRLRKWTAKQYYTFLNVRNRLDEKIPDQDRRGQDGVESR.

Position 28 is a phosphoserine (Ser-28). 11 helical membrane passes run Leu-61 to Ala-81, Ala-100 to Leu-120, Cys-125 to Lys-145, Ile-187 to Ala-207, Trp-214 to Phe-234, Ile-340 to Leu-360, Ala-382 to Gly-402, Leu-426 to Gly-446, Val-458 to Leu-478, Val-486 to Phe-506, and Ile-522 to Gly-542.

The protein belongs to the major facilitator superfamily.

It is found in the cytoplasm. The protein resides in the cell cortex. The protein localises to the membrane. This is an uncharacterized protein from Schizosaccharomyces pombe (strain 972 / ATCC 24843) (Fission yeast).